Reading from the N-terminus, the 482-residue chain is Major cardiolipin synthase ClsA (482 aa).

Transmembrane regions (helical) follow at residues 3–23 (ISSI…IIVI) and 34–54 (WAWL…YLLF). PLD phosphodiesterase domains are found at residues 217–244 (LNYR…GDEY) and 395–422 (DNGF…DVRS). Residues His-222, Lys-224, Asp-229, His-400, Lys-402, and Asp-407 contribute to the active site.

This sequence belongs to the phospholipase D family. Cardiolipin synthase subfamily.

It localises to the cell membrane. The enzyme catalyses 2 a 1,2-diacyl-sn-glycero-3-phospho-(1'-sn-glycerol) = a cardiolipin + glycerol. Its function is as follows. Catalyzes the reversible phosphatidyl group transfer from one phosphatidylglycerol molecule to another to form cardiolipin (CL) (diphosphatidylglycerol) and glycerol. The protein is Major cardiolipin synthase ClsA (clsA) of Bacillus subtilis (strain 168).